Reading from the N-terminus, the 418-residue chain is tRNA(Met) cytidine acetate ligase (418 aa).

ATP-binding residues include glycine 95, asparagine 161, and arginine 186.

Belongs to the TmcAL family.

It localises to the cytoplasm. It carries out the reaction cytidine(34) in elongator tRNA(Met) + acetate + ATP = N(4)-acetylcytidine(34) in elongator tRNA(Met) + AMP + diphosphate. Catalyzes the formation of N(4)-acetylcytidine (ac(4)C) at the wobble position of elongator tRNA(Met), using acetate and ATP as substrates. First activates an acetate ion to form acetyladenylate (Ac-AMP) and then transfers the acetyl group to tRNA to form ac(4)C34. The polypeptide is tRNA(Met) cytidine acetate ligase (Thermotoga petrophila (strain ATCC BAA-488 / DSM 13995 / JCM 10881 / RKU-1)).